The sequence spans 714 residues: Phosphoribosylformylglycinamidine synthase subunit PurL (714 aa).

His-34 is a catalytic residue. Residue Tyr-37 coordinates ATP. Mg(2+) is bound at residue Glu-78. Substrate-binding positions include 79-82 (SHNH) and Arg-101. His-80 serves as the catalytic Proton acceptor. Asp-102 contacts Mg(2+). Gln-226 is a substrate binding site. Asp-254 lines the Mg(2+) pocket. 298–300 (ESQ) contacts substrate. ATP contacts are provided by Asp-474 and Gly-511. Asn-512 contributes to the Mg(2+) binding site. Ser-514 is a substrate binding site.

The protein belongs to the FGAMS family. As to quaternary structure, monomer. Part of the FGAM synthase complex composed of 1 PurL, 1 PurQ and 2 PurS subunits.

Its subcellular location is the cytoplasm. It catalyses the reaction N(2)-formyl-N(1)-(5-phospho-beta-D-ribosyl)glycinamide + L-glutamine + ATP + H2O = 2-formamido-N(1)-(5-O-phospho-beta-D-ribosyl)acetamidine + L-glutamate + ADP + phosphate + H(+). It functions in the pathway purine metabolism; IMP biosynthesis via de novo pathway; 5-amino-1-(5-phospho-D-ribosyl)imidazole from N(2)-formyl-N(1)-(5-phospho-D-ribosyl)glycinamide: step 1/2. In terms of biological role, part of the phosphoribosylformylglycinamidine synthase complex involved in the purines biosynthetic pathway. Catalyzes the ATP-dependent conversion of formylglycinamide ribonucleotide (FGAR) and glutamine to yield formylglycinamidine ribonucleotide (FGAM) and glutamate. The FGAM synthase complex is composed of three subunits. PurQ produces an ammonia molecule by converting glutamine to glutamate. PurL transfers the ammonia molecule to FGAR to form FGAM in an ATP-dependent manner. PurS interacts with PurQ and PurL and is thought to assist in the transfer of the ammonia molecule from PurQ to PurL. In Methanothermobacter marburgensis (strain ATCC BAA-927 / DSM 2133 / JCM 14651 / NBRC 100331 / OCM 82 / Marburg) (Methanobacterium thermoautotrophicum), this protein is Phosphoribosylformylglycinamidine synthase subunit PurL.